Here is a 61-residue protein sequence, read N- to C-terminus: Photosystem II reaction center protein K (61 aa).

A propeptide spanning residues 1–24 is cleaved from the precursor; sequence MLNTFSLIGICLNSTLYSSSFFFG. The chain crosses the membrane as a helical span at residues 36–56; sequence IVDIMPVIPLFFFLLAFVWQA.

This sequence belongs to the PsbK family. PSII is composed of 1 copy each of membrane proteins PsbA, PsbB, PsbC, PsbD, PsbE, PsbF, PsbH, PsbI, PsbJ, PsbK, PsbL, PsbM, PsbT, PsbX, PsbY, PsbZ, Psb30/Ycf12, at least 3 peripheral proteins of the oxygen-evolving complex and a large number of cofactors. It forms dimeric complexes.

It localises to the plastid. The protein resides in the chloroplast thylakoid membrane. One of the components of the core complex of photosystem II (PSII). PSII is a light-driven water:plastoquinone oxidoreductase that uses light energy to abstract electrons from H(2)O, generating O(2) and a proton gradient subsequently used for ATP formation. It consists of a core antenna complex that captures photons, and an electron transfer chain that converts photonic excitation into a charge separation. This chain is Photosystem II reaction center protein K, found in Solanum bulbocastanum (Wild potato).